Consider the following 478-residue polypeptide: DNA gyrase subunit B (478 aa).

The 120-residue stretch at 319–438 (CEIYLVEGDS…GGHVYIAQPP (120 aa)) folds into the Toprim domain. Mg(2+) is bound by residues Glu325, Asp403, and Asp405.

The protein belongs to the type II topoisomerase GyrB family. In terms of assembly, heterotetramer, composed of two GyrA and two GyrB chains. In the heterotetramer, GyrA contains the active site tyrosine that forms a transient covalent intermediate with DNA, while GyrB binds cofactors and catalyzes ATP hydrolysis. Requires Mg(2+) as cofactor. The cofactor is Mn(2+). Ca(2+) serves as cofactor.

The protein resides in the cytoplasm. It catalyses the reaction ATP-dependent breakage, passage and rejoining of double-stranded DNA.. A type II topoisomerase that negatively supercoils closed circular double-stranded (ds) DNA in an ATP-dependent manner to modulate DNA topology and maintain chromosomes in an underwound state. Negative supercoiling favors strand separation, and DNA replication, transcription, recombination and repair, all of which involve strand separation. Also able to catalyze the interconversion of other topological isomers of dsDNA rings, including catenanes and knotted rings. Type II topoisomerases break and join 2 DNA strands simultaneously in an ATP-dependent manner. In Cytophaga aurantiaca, this protein is DNA gyrase subunit B (gyrB).